Consider the following 531-residue polypeptide: NADH-quinone oxidoreductase subunit N (531 aa).

14 helical membrane passes run 8–28 (VEYF…AGVL), 41–61 (AQVT…IVVA), 81–101 (ATLF…VFMA), 146–166 (GATQ…MMVF), 172–192 (LLTM…MCGL), 208–228 (FLLG…LYGA), 250–270 (ALAG…AVPF), 282–302 (PTPI…GALL), 318–338 (PVLW…AVNQ), 350–370 (VAHV…GLSA), 372–392 (LFYL…VGLV), 418–438 (IVGV…LTSG), 453–473 (GAVP…YFYV), and 500–520 (AAIA…QPVL).

The protein belongs to the complex I subunit 2 family. NDH-1 is composed of 14 different subunits. Subunits NuoA, H, J, K, L, M, N constitute the membrane sector of the complex.

It localises to the cell membrane. The catalysed reaction is a quinone + NADH + 5 H(+)(in) = a quinol + NAD(+) + 4 H(+)(out). NDH-1 shuttles electrons from NADH, via FMN and iron-sulfur (Fe-S) centers, to quinones in the respiratory chain. The immediate electron acceptor for the enzyme in this species is believed to be a menaquinone. Couples the redox reaction to proton translocation (for every two electrons transferred, four hydrogen ions are translocated across the cytoplasmic membrane), and thus conserves the redox energy in a proton gradient. This chain is NADH-quinone oxidoreductase subunit N, found in Mycobacterium tuberculosis (strain CDC 1551 / Oshkosh).